The sequence spans 216 residues: GTP cyclohydrolase 1 (216 aa).

The Zn(2+) site is built by C108, H111, and C179.

It belongs to the GTP cyclohydrolase I family. Toroid-shaped homodecamer, composed of two pentamers of five dimers.

The catalysed reaction is GTP + H2O = 7,8-dihydroneopterin 3'-triphosphate + formate + H(+). It functions in the pathway cofactor biosynthesis; 7,8-dihydroneopterin triphosphate biosynthesis; 7,8-dihydroneopterin triphosphate from GTP: step 1/1. This chain is GTP cyclohydrolase 1, found in Shewanella sp. (strain MR-7).